Consider the following 229-residue polypeptide: Demethylmenaquinone methyltransferase (229 aa).

S-adenosyl-L-methionine contacts are provided by residues T58, D78, and 100-101; that span reads DA.

It belongs to the class I-like SAM-binding methyltransferase superfamily. MenG/UbiE family.

The enzyme catalyses a 2-demethylmenaquinol + S-adenosyl-L-methionine = a menaquinol + S-adenosyl-L-homocysteine + H(+). It functions in the pathway quinol/quinone metabolism; menaquinone biosynthesis; menaquinol from 1,4-dihydroxy-2-naphthoate: step 2/2. Methyltransferase required for the conversion of demethylmenaquinol (DMKH2) to menaquinol (MKH2). The polypeptide is Demethylmenaquinone methyltransferase (Thermotoga maritima (strain ATCC 43589 / DSM 3109 / JCM 10099 / NBRC 100826 / MSB8)).